A 107-amino-acid polypeptide reads, in one-letter code: Large ribosomal subunit protein P1 (107 aa).

Low complexity predominate over residues 68-82 (PATAGAPAAAGAAAP). The disordered stretch occupies residues 68 to 107 (PATAGAPAAAGAAAPAEEKKEEKEEEKEESDEDMGFGLFD). The segment covering 90 to 101 (KEEEKEESDEDM) has biased composition (acidic residues).

It belongs to the eukaryotic ribosomal protein P1/P2 family. In terms of assembly, P1 and P2 exist as dimers at the large ribosomal subunit.

It is found in the cytoplasm. In terms of biological role, plays an important role in the elongation step of protein synthesis. This is Large ribosomal subunit protein P1 from Penicillium brevicompactum.